We begin with the raw amino-acid sequence, 375 residues long: AT-rich binding protein (375 aa).

The C2H2-type 1 zinc-finger motif lies at 29–52 (IVCHTCQEELQTQDQFWKHIQDEH). Basic and acidic residues predominate over residues 110 to 119 (DDQREMDIHE). Residues 110-142 (DDQREMDIHEAQQQQHQQQQQHQQQQQLQQQQQ) form a disordered region. The span at 121-142 (QQQQHQQQQQHQQQQQLQQQQQ) shows a compositional bias: low complexity. C2H2-type zinc fingers lie at residues 308-332 (YICD…RVVH) and 338-361 (FNCE…KKKH).

The protein resides in the nucleus. Functionally, may be a transcription factor for genes having (A+T) stretches in their promoter and/or enhancer regions. Binds to AT rich DNA. The polypeptide is AT-rich binding protein (Drosophila pseudoobscura pseudoobscura (Fruit fly)).